The primary structure comprises 947 residues: Protocadherin alpha-4 (947 aa).

Positions 1-29 (MEFSWGSGQESQRLLLSFLFLAIWEPGNS) are cleaved as a signal peptide. 6 Cadherin domains span residues 30–133 (QLHY…PPTF), 134–242 (PTTQ…SPVF), 243–350 (DRSL…APEL), 351–455 (EFKS…APAF), 456–565 (AQPE…APTL), and 573–681 (SGGI…APSR). Over 30–697 (QLHYSIPEEA…NAEASLVDVN (668 aa)) the chain is Extracellular. A disulfide bond links cysteine 96 and cysteine 102. Residues asparagine 257 and asparagine 265 are each glycosylated (N-linked (GlcNAc...) asparagine). N-linked (GlcNAc...) asparagine glycosylation occurs at asparagine 548. Residues 698 to 718 (VYLIIAICAVSSLLVLTLLLY) form a helical membrane-spanning segment. Residues 719–947 (SALRCSTVPS…GNSTTDNSDQ (229 aa)) lie on the Cytoplasmic side of the membrane. PXXP repeat units follow at residues 734-737 (PPKP), 774-777 (PSLS), 796-799 (PRQP), 829-832 (PGGP), 870-873 (PGNP), and 888-891 (PGSP). The segment at 734–891 (PPKPVMVCSS…PDKFIIPGSP (158 aa)) is 6 X 4 AA repeats of P-X-X-P. The tract at residues 738-947 (VMVCSSAVGS…GNSTTDNSDQ (210 aa)) is required for interaction with FYN. Disordered regions lie at residues 761–805 (GEYP…DWRY) and 824–853 (ILRA…EVSP). The tract at residues 897 to 947 (RQESANNQIDKSDFITFGKKEETKKKKKKKKGNKTQEKKEKGNSTTDNSDQ) is disordered. Over residues 906–920 (DKSDFITFGKKEETK) the composition is skewed to basic and acidic residues.

As to quaternary structure, forms homodimers in trans (molecules expressed by two different cells). Forms promiscuous heterodimers in cis (at the plasma membrane of the same cell) with other protocadherins. Interacts with FYN. Detected in brain.

It localises to the cell membrane. Calcium-dependent cell-adhesion protein involved in cells self-recognition and non-self discrimination. Thereby, it is involved in the establishment and maintenance of specific neuronal connections in the brain. This is Protocadherin alpha-4 from Rattus norvegicus (Rat).